Consider the following 277-residue polypeptide: 4-hydroxy-tetrahydrodipicolinate reductase (277 aa).

9-14 is a binding site for NAD(+); the sequence is GATGRM. Residue Lys37 coordinates NADP(+). 75–77 is an NAD(+) binding site; it reads GTS. His132 acts as the Proton donor/acceptor in catalysis. Residue Lys136 is the Proton donor of the active site. 142–143 provides a ligand contact to (S)-2,3,4,5-tetrahydrodipicolinate; that stretch reads GT. Residues 245–277 form a disordered region; the sequence is SRERATQTAPTGAASGPVDDGGPSGQAATVTSA.

The protein belongs to the DapB family.

The protein localises to the cytoplasm. The catalysed reaction is (S)-2,3,4,5-tetrahydrodipicolinate + NAD(+) + H2O = (2S,4S)-4-hydroxy-2,3,4,5-tetrahydrodipicolinate + NADH + H(+). It carries out the reaction (S)-2,3,4,5-tetrahydrodipicolinate + NADP(+) + H2O = (2S,4S)-4-hydroxy-2,3,4,5-tetrahydrodipicolinate + NADPH + H(+). It participates in amino-acid biosynthesis; L-lysine biosynthesis via DAP pathway; (S)-tetrahydrodipicolinate from L-aspartate: step 4/4. Its function is as follows. Catalyzes the conversion of 4-hydroxy-tetrahydrodipicolinate (HTPA) to tetrahydrodipicolinate. The polypeptide is 4-hydroxy-tetrahydrodipicolinate reductase (Clavibacter sepedonicus (Clavibacter michiganensis subsp. sepedonicus)).